Consider the following 98-residue polypeptide: UPF0235 protein CCNA_03737 (98 aa).

It belongs to the UPF0235 family.

The sequence is that of UPF0235 protein CCNA_03737 from Caulobacter vibrioides (strain NA1000 / CB15N) (Caulobacter crescentus).